A 226-amino-acid polypeptide reads, in one-letter code: NAD(P)H-hydrate epimerase (226 aa).

Residues 10–215 (AIELDLDLFE…ALQRKYQLNL (206 aa)) enclose the YjeF N-terminal domain. 58-62 (NNGGD) provides a ligand contact to (6S)-NADPHX. K(+) contacts are provided by Asn-59 and Asp-123. Residues 127-133 (GFGFKPP) and Asp-156 each bind (6S)-NADPHX. Residue Ser-159 participates in K(+) binding.

This sequence belongs to the NnrE/AIBP family. Requires K(+) as cofactor.

It carries out the reaction (6R)-NADHX = (6S)-NADHX. The enzyme catalyses (6R)-NADPHX = (6S)-NADPHX. In terms of biological role, catalyzes the epimerization of the S- and R-forms of NAD(P)HX, a damaged form of NAD(P)H that is a result of enzymatic or heat-dependent hydration. This is a prerequisite for the S-specific NAD(P)H-hydrate dehydratase to allow the repair of both epimers of NAD(P)HX. This is NAD(P)H-hydrate epimerase from Drosophila pseudoobscura pseudoobscura (Fruit fly).